The primary structure comprises 1582 residues: ATP-binding cassette sub-family C member 8 (1582 aa).

Residues 1-30 (MPLAFCGTENHSAAYRVDQGVLNNGCFVDA) are Extracellular-facing. Cys-6 and Cys-26 are disulfide-bonded. N-linked (GlcNAc...) asparagine glycosylation occurs at Asn-10. The helical transmembrane segment at 31 to 47 (LNVVPHVFLLFITFPIL) threads the bilayer. Residues 48-72 (FIGWGSQSSKVHIHHSTWLHFPGHN) are Cytoplasmic-facing. Residues 73–89 (LRWILTFILLFVLVCEI) traverse the membrane as a helical segment. Residues 90-106 (AEGILSDGVTESRHLHL) lie on the Extracellular side of the membrane. Residues 107–123 (YMPAGMAFMAAITSVVY) traverse the membrane as a helical segment. Topologically, residues 124–136 (YHNIETSNFPKLL) are cytoplasmic. Residues 137–153 (IALLIYWTLAFITKTIK) form a helical membrane-spanning segment. At 154-169 (FVKFYDHAIGFSQLRF) the chain is on the extracellular side. A helical transmembrane segment spans residues 170–186 (CLTGLLVILYGMLLLVE). At 187 to 303 (VNVIRVRRYV…AFGRRLVLSS (117 aa)) the chain is on the cytoplasmic side. One can recognise an ABC transmembrane type-1 1 domain in the interval 299–602 (LVLSSTFRIL…LSSVVRSTVK (304 aa)). The chain crosses the membrane as a helical span at residues 304-319 (TFRILADLLGFAGPLC). Residues 320 to 356 (IFGIVDHLGKENHVFQPKTQFLGVYFVSSQEFLGNAY) lie on the Extracellular side of the membrane. The helical transmembrane segment at 357 to 372 (VLAVLLFLALLLQRTF) threads the bilayer. Residues 373-438 (LQASYYVAIE…MWFFFLCPNL (66 aa)) lie on the Cytoplasmic side of the membrane. Residues 439 to 454 (WAMPVQIIVGVILLYY) form a helical membrane-spanning segment. Over 455–460 (ILGVSA) the chain is Extracellular. Residues 461-473 (LIGAAVIILLAPV) traverse the membrane as a helical segment. The Cytoplasmic segment spans residues 474–541 (QYFVATKLSQ…SLRAFAVYTS (68 aa)). A helical membrane pass occupies residues 542 to 557 (ISIFMNTAIPIAAVLI). Over 558–576 (TFVGHVSFFKESDFSPSVA) the chain is Extracellular. Residues 577–592 (FASLSLFHILVTPLFL) traverse the membrane as a helical segment. At 593 to 1013 (LSSVVRSTVK…YLSSAGILLL (421 aa)) the chain is on the cytoplasmic side. One can recognise an ABC transporter 1 domain in the interval 679–930 (VQIIGGFFTW…ECQLFEHWKT (252 aa)). ATP-binding residues include Trp-688, Gly-716, Ser-720, and Ser-721. A Mg(2+)-binding site is contributed by Ser-720. Residues 741–768 (SSLPDSEGEDPSNPERETAADSDARSRG) form a disordered region. Positions 753-766 (NPERETAADSDARS) are enriched in basic and acidic residues. Gln-775 contributes to the Mg(2+) binding site. Residues 939–950 (LEKETVMERKAP) show a composition bias toward basic and acidic residues. The disordered stretch occupies residues 939–962 (LEKETVMERKAPEPSQGLPRAMSS). The region spanning 1013–1307 (LSLLVFSQLL…MVRNLADMEI (295 aa)) is the ABC transmembrane type-1 2 domain. The helical transmembrane segment at 1014 to 1031 (SLLVFSQLLKHMVLVAID) threads the bilayer. At 1032–1067 (YWLAKWTDSALVLSPAARNCSLSQECALDQSVYAMV) the chain is on the extracellular side. Asn-1050 is a glycosylation site (N-linked (GlcNAc...) asparagine). Residues 1068-1084 (FTVLCSLGIALCLVTSV) form a helical membrane-spanning segment. The Cytoplasmic portion of the chain corresponds to 1085–1143 (TVEWTGLKVAKRLHRSLLNRIILAPMRFFETTPLGSILNRFSSDCNTIDQHIPSTLECL). A helical membrane pass occupies residues 1144 to 1161 (SRSTLLCVSALAVISYVT). Pro-1162 is a topological domain (extracellular). Residues 1163-1175 (VFLVALLPLAVVC) traverse the membrane as a helical segment. The Cytoplasmic portion of the chain corresponds to 1176–1249 (YFIQKYFRVA…FLTAANRWLE (74 aa)). Residues 1250–1265 (VRMEYIGACVVLIAAA) form a helical membrane-spanning segment. Residues 1266–1281 (TSISNSLHRELSAGLV) lie on the Extracellular side of the membrane. The chain crosses the membrane as a helical span at residues 1282 to 1297 (GLGLTYALMVSNYLNW). Residues 1298–1582 (MVRNLADMEI…VFASFVRADK (285 aa)) lie on the Cytoplasmic side of the membrane. One can recognise an ABC transporter 2 domain in the interval 1345–1579 (IQIQNLSVRY…KDSVFASFVR (235 aa)). Residues Thr-1381, Gly-1382, Gly-1384, Lys-1385, Ser-1386, and Ser-1387 each coordinate ADP. Position 1483 (Ser-1483) interacts with ATP.

The protein belongs to the ABC transporter superfamily. ABCC family. Conjugate transporter (TC 3.A.1.208) subfamily. Forms an heterooctamer with KCNJ11; four ABCC8/SUR1 molecules interact with one KCNJ11 homotetramer.

The protein resides in the cell membrane. Its activity is regulated as follows. KATP channels are regulated by cytoplasmic ATP/ADP ratios; ATP inhibits the channel by closing the pore, while ADP activates the channel. Activated by phosphatidylinositol 4,5-biphosphate (PtdIns(4,5)P2). Functionally, regulator subunit of pancreatic ATP-sensitive potassium channel (KATP), playing a major role in the regulation of insulin release. In pancreatic cells, it forms KATP channels with KCNJ11; KCNJ11 forms the channel pore while ABCC8 is required for activation and regulation. This Rattus norvegicus (Rat) protein is ATP-binding cassette sub-family C member 8 (Abcc8).